The sequence spans 350 residues: Biotin synthase (350 aa).

Residues 54 to 278 (REIQLSTLLS…TMPQSYVRLS (225 aa)) enclose the Radical SAM core domain. Positions 69, 73, and 76 each coordinate [4Fe-4S] cluster. [2Fe-2S] cluster-binding residues include Cys113, Cys144, Cys204, and Arg276.

This sequence belongs to the radical SAM superfamily. Biotin synthase family. Homodimer. It depends on [4Fe-4S] cluster as a cofactor. The cofactor is [2Fe-2S] cluster.

The catalysed reaction is (4R,5S)-dethiobiotin + (sulfur carrier)-SH + 2 reduced [2Fe-2S]-[ferredoxin] + 2 S-adenosyl-L-methionine = (sulfur carrier)-H + biotin + 2 5'-deoxyadenosine + 2 L-methionine + 2 oxidized [2Fe-2S]-[ferredoxin]. It functions in the pathway cofactor biosynthesis; biotin biosynthesis; biotin from 7,8-diaminononanoate: step 2/2. Its function is as follows. Catalyzes the conversion of dethiobiotin (DTB) to biotin by the insertion of a sulfur atom into dethiobiotin via a radical-based mechanism. The protein is Biotin synthase of Neisseria meningitidis serogroup C (strain 053442).